We begin with the raw amino-acid sequence, 98 residues long: Homeobox protein SMOX-4 (98 aa).

A DNA-binding region (homeobox) is located at residues 37 to 96 (SFRNRTAFTDYQLICLEREFSHIQYLSRIDRIHLAQNLNLTEKQVKIWFQNRRVRWRKRN).

Its subcellular location is the nucleus. This is Homeobox protein SMOX-4 (SMOX-4) from Schistosoma mansoni (Blood fluke).